The chain runs to 570 residues: Zinc finger protein 76 (570 aa).

A Glycyl lysine isopeptide (Lys-Gly) (interchain with G-Cter in SUMO2) cross-link involves residue Lys24. A run of 3 repeats spans residues 34–45 (IQLEDGTTAYIH), 62–73 (VQLEDGSMAYIH), and 88–99 (VQLEDGSTAYIH). The segment at 34–99 (IQLEDGTTAY…LEDGSTAYIH (66 aa)) is 3 X 12 AA approximate repeats. 7 consecutive C2H2-type zinc fingers follow at residues 165 to 189 (FRCG…ERAH), 195 to 219 (YRCD…VRTH), 225 to 249 (YKCP…VRTH), 255 to 279 (FQCP…VRTH), 285 to 309 (YTCP…VRIH), 315 to 339 (YVCT…HVVH), and 345 to 368 (YTCS…RSAH). A disordered region spans residues 365–401 (RSAHGELEATEESEQALYEQQQLEAASAAEESPPPKR). Low complexity predominate over residues 379–395 (QALYEQQQLEAASAAEE).

This sequence belongs to the krueppel C2H2-type zinc-finger protein family. Testis.

It localises to the nucleus. In terms of biological role, may be involved in transcriptional regulation. This chain is Zinc finger protein 76 (ZNF76), found in Homo sapiens (Human).